Consider the following 334-residue polypeptide: Phospho-N-acetylmuramoyl-pentapeptide-transferase (334 aa).

Helical transmembrane passes span 2 to 22, 55 to 75, 78 to 98, 116 to 136, 154 to 174, 187 to 207, 211 to 231, 236 to 256, 262 to 282, and 311 to 331; these read IPVLVAAGVAFLVTLVLGPVV, VIFLFGAAAAVLVVAFLPGGV, GWIEGLLVLAVALGFGVLGFM, EKLLGQVLIAVALAVTAVFVL, GLALDLGWWFFLGVTVFVVLA, GLAAGTFAVAALAFAMIALVM, WVGIVLGALVGGCVGFLCYNF, VFMGDTGSLALGGGLSAAAVI, FLLIIGGVFVIETLSVIIQVI, and VVLTFWTVGLVLAVLGLAGLK.

The protein belongs to the glycosyltransferase 4 family. MraY subfamily. Mg(2+) is required as a cofactor.

The protein localises to the cell membrane. The enzyme catalyses UDP-N-acetyl-alpha-D-muramoyl-L-alanyl-gamma-D-glutamyl-meso-2,6-diaminopimeloyl-D-alanyl-D-alanine + di-trans,octa-cis-undecaprenyl phosphate = di-trans,octa-cis-undecaprenyl diphospho-N-acetyl-alpha-D-muramoyl-L-alanyl-D-glutamyl-meso-2,6-diaminopimeloyl-D-alanyl-D-alanine + UMP. It functions in the pathway cell wall biogenesis; peptidoglycan biosynthesis. Its function is as follows. Catalyzes the initial step of the lipid cycle reactions in the biosynthesis of the cell wall peptidoglycan: transfers peptidoglycan precursor phospho-MurNAc-pentapeptide from UDP-MurNAc-pentapeptide onto the lipid carrier undecaprenyl phosphate, yielding undecaprenyl-pyrophosphoryl-MurNAc-pentapeptide, known as lipid I. In Desulforudis audaxviator (strain MP104C), this protein is Phospho-N-acetylmuramoyl-pentapeptide-transferase.